The chain runs to 241 residues: LAS seventeen-binding protein 1 (241 aa).

The residue at position 2 (Ser2) is an N-acetylserine. A Glycyl lysine isopeptide (Lys-Gly) (interchain with G-Cter in ubiquitin) cross-link involves residue Lys41. Ser48 carries the phosphoserine modification. In terms of domain architecture, SH3 spans 53–112 (DTEEYVEALYDFEAQQDGDLSLKTGDKIQVLEKISPDWYRGKSNNKIGIFPANYVKPAFT). Lys79 participates in a covalent cross-link: Glycyl lysine isopeptide (Lys-Gly) (interchain with G-Cter in ubiquitin). Phosphoserine occurs at positions 114 and 116. Residue Lys118 forms a Glycyl lysine isopeptide (Lys-Gly) (interchain with G-Cter in ubiquitin) linkage. Residues 118–131 (KSAEAASSSTVSRP) are compositionally biased toward low complexity. The tract at residues 118-213 (KSAEAASSST…QQSSGASSAF (96 aa)) is disordered. A PY motif motif is present at residues 135–138 (PPSY). The segment covering 163 to 179 (APPPQQQQAPLPYPPPF) has biased composition (pro residues). A compositionally biased stretch (low complexity) spans 180 to 213 (TNYYQQPQQQYAPPSQQAPVEAQPQQSSGASSAF). A Glycyl lysine isopeptide (Lys-Gly) (interchain with G-Cter in ubiquitin) cross-link involves residue Lys219.

It belongs to the LSB1 family. As to quaternary structure, interacts with LAS17, RSP5 and SUP35. Post-translationally, ubiquitinated by RSP5.

The protein resides in the cytoplasm. It is found in the nucleus. The protein localises to the cytoskeleton. Its subcellular location is the actin patch. Its function is as follows. Involved in resistance to EDTA. In Saccharomyces cerevisiae (strain ATCC 204508 / S288c) (Baker's yeast), this protein is LAS seventeen-binding protein 1 (LSB1).